Here is a 427-residue protein sequence, read N- to C-terminus: Chaperone SurA (427 aa).

Positions 1–19 (MKIWKSILFTTLLSCGAVA) are cleaved as a signal peptide. 2 PpiC domains span residues 170–268 (TVQY…KIED) and 277–377 (VTEV…EVLD).

It is found in the periplasm. It carries out the reaction [protein]-peptidylproline (omega=180) = [protein]-peptidylproline (omega=0). In terms of biological role, chaperone involved in the correct folding and assembly of outer membrane proteins. Recognizes specific patterns of aromatic residues and the orientation of their side chains, which are found more frequently in integral outer membrane proteins. May act in both early periplasmic and late outer membrane-associated steps of protein maturation. The protein is Chaperone SurA of Vibrio parahaemolyticus serotype O3:K6 (strain RIMD 2210633).